A 1379-amino-acid polypeptide reads, in one-letter code: DNA-directed RNA polymerase subunit beta (1379 aa).

The protein belongs to the RNA polymerase beta chain family. In terms of assembly, the RNAP catalytic core consists of 2 alpha, 1 beta, 1 beta' and 1 omega subunit. When a sigma factor is associated with the core the holoenzyme is formed, which can initiate transcription.

It carries out the reaction RNA(n) + a ribonucleoside 5'-triphosphate = RNA(n+1) + diphosphate. DNA-dependent RNA polymerase catalyzes the transcription of DNA into RNA using the four ribonucleoside triphosphates as substrates. This is DNA-directed RNA polymerase subunit beta from Allorhizobium ampelinum (strain ATCC BAA-846 / DSM 112012 / S4) (Agrobacterium vitis (strain S4)).